Consider the following 110-residue polypeptide: uncharacterized protein (110 aa).

Positions 38–62 (SVQQNARAEEAEAAAPPAEEDSLPD) are disordered.

This is an uncharacterized protein from Mus musculus (Mouse).